Consider the following 211-residue polypeptide: Protein-L-isoaspartate O-methyltransferase 2 (211 aa).

The active site involves S61.

It belongs to the methyltransferase superfamily. L-isoaspartyl/D-aspartyl protein methyltransferase family.

Its subcellular location is the cytoplasm. The enzyme catalyses [protein]-L-isoaspartate + S-adenosyl-L-methionine = [protein]-L-isoaspartate alpha-methyl ester + S-adenosyl-L-homocysteine. In terms of biological role, catalyzes the methyl esterification of L-isoaspartyl residues in peptides and proteins that result from spontaneous decomposition of normal L-aspartyl and L-asparaginyl residues. It plays a role in the repair and/or degradation of damaged proteins. This is Protein-L-isoaspartate O-methyltransferase 2 from Polaromonas sp. (strain JS666 / ATCC BAA-500).